A 246-amino-acid chain; its full sequence is Mast cell protease 1 (246 aa).

The first 18 residues, 1–18 (MQALLFLLALLWPPEAGA), serve as a signal peptide directing secretion. Residues 19–20 (EE) constitute a propeptide, activation peptide. Residues 21–244 (IIGGVESKPH…YVPWINLVIR (224 aa)) form the Peptidase S1 domain. An intrachain disulfide couples Cys50 to Cys66. Active-site charge relay system residues include His65 and Asp109. 2 cysteine pairs are disulfide-bonded: Cys143–Cys208 and Cys174–Cys187. Catalysis depends on Ser202, which acts as the Charge relay system.

Belongs to the peptidase S1 family. Granzyme subfamily.

This is Mast cell protease 1 from Meriones unguiculatus (Mongolian jird).